Here is a 67-residue protein sequence, read N- to C-terminus: Small ribosomal subunit protein bS21 (67 aa).

It belongs to the bacterial ribosomal protein bS21 family.

The protein is Small ribosomal subunit protein bS21 of Rhodospirillum centenum (strain ATCC 51521 / SW).